The primary structure comprises 182 residues: ADP-ribosylation factor-like protein 11 (182 aa).

Residue G2 is the site of N-myristoyl glycine attachment. Residues 19-26 (GLDSAGKT), 63-67 (DVGGQ), and 122-125 (NKQE) each bind GTP.

It belongs to the small GTPase superfamily. Arf family.

May play a role in apoptosis. May act as a tumor suppressor. The protein is ADP-ribosylation factor-like protein 11 (ARL11) of Bos taurus (Bovine).